The primary structure comprises 187 residues: Oleosin Zm-II (187 aa).

Residue Ala2 is modified to N-acetylalanine. The interval 2–51 is polar; it reads ADRDRSGIYGGAHATYGQQQQQGGGGRPMGEQVKKGMLHDKGPTASQALT. The segment at 17 to 42 is disordered; sequence YGQQQQQGGGGRPMGEQVKKGMLHDK. The segment covering 33–42 has biased composition (basic and acidic residues); it reads QVKKGMLHDK. 3 consecutive transmembrane segments (helical) span residues 50–70, 83–103, and 104–124; these read LTVA…GLAL, VFLI…TAVM, and GFLT…CLAN. Residues 52-123 are hydrophobic; that stretch reads VATLFPLGGL…GGLSSLTCLA (72 aa). Over residues 155 to 169 the composition is skewed to low complexity; sequence TAQAGQAIQGRAQEA. Residues 155 to 187 are disordered; that stretch reads TAQAGQAIQGRAQEAGTGGGAGAGAGGGGRASS. The segment covering 170–187 has biased composition (gly residues); that stretch reads GTGGGAGAGAGGGGRASS.

The protein belongs to the oleosin family. In terms of processing, the N-terminus is blocked. As to expression, found in embryonic axis, scutellum, and aleurone layer.

Its subcellular location is the lipid droplet. The protein resides in the membrane. Its function is as follows. May have a structural role to stabilize the lipid body during desiccation of the seed by preventing coalescence of the oil. Probably interacts with both lipid and phospholipid moieties of lipid bodies. May also provide recognition signals for specific lipase anchorage in lipolysis during seedling growth. The sequence is that of Oleosin Zm-II (OLE18) from Zea mays (Maize).